A 93-amino-acid chain; its full sequence is Putative pterin-4-alpha-carbinolamine dehydratase (93 aa).

This sequence belongs to the pterin-4-alpha-carbinolamine dehydratase family.

The enzyme catalyses (4aS,6R)-4a-hydroxy-L-erythro-5,6,7,8-tetrahydrobiopterin = (6R)-L-erythro-6,7-dihydrobiopterin + H2O. The chain is Putative pterin-4-alpha-carbinolamine dehydratase from Roseiflexus sp. (strain RS-1).